Reading from the N-terminus, the 164-residue chain is Osteocalcin 2b (164 aa).

A signal peptide spans 1-18 (MKSLTLLTICAVLSVSLS). The propeptide occupies 19–115 (MNDLALDVVL…LASVLLRRKR (97 aa)). Residues 30–95 (PDPAAEPAPA…EAMAEDPAAA (66 aa)) are compositionally biased toward low complexity. The tract at residues 30 to 99 (PDPAAEPAPA…EDPAAATEPE (70 aa)) is disordered. Residues 128–160 (QVESLSEVCELNLACEHMAETAGIVAAYTAYYG) form the Gla domain. The Ca(2+) site is built by glutamate 130, glutamate 134, and glutamate 137. 4-carboxyglutamate is present on residues glutamate 130, glutamate 134, and glutamate 137. An intrachain disulfide couples cysteine 136 to cysteine 142.

The protein belongs to the osteocalcin/matrix Gla protein family. In terms of processing, gamma-carboxyglutamate residues are formed by vitamin K dependent carboxylation. These residues are essential for the binding of calcium.

The protein resides in the secreted. Its function is as follows. Binds strongly to apatite and calcium. The protein is Osteocalcin 2b of Oncorhynchus mykiss (Rainbow trout).